The chain runs to 321 residues: ATP-dependent 6-phosphofructokinase (321 aa).

Residue Gly-11 coordinates ATP. 21 to 25 (RAVVR) lines the ADP pocket. ATP-binding positions include 72-73 (RC) and 102-105 (GDGS). Asp-103 lines the Mg(2+) pocket. 126-128 (TID) provides a ligand contact to substrate. The Proton acceptor role is filled by Asp-128. Residue Arg-155 coordinates ADP. Substrate-binding positions include Arg-163 and 170 to 172 (MGR). Residues 186–188 (GAE), Arg-212, and 214–216 (KLH) contribute to the ADP site. Substrate contacts are provided by residues Glu-223, Arg-245, and 251–254 (HIQR).

The protein belongs to the phosphofructokinase type A (PFKA) family. ATP-dependent PFK group I subfamily. Prokaryotic clade 'B1' sub-subfamily. In terms of assembly, homotetramer. It depends on Mg(2+) as a cofactor.

The protein localises to the cytoplasm. The enzyme catalyses beta-D-fructose 6-phosphate + ATP = beta-D-fructose 1,6-bisphosphate + ADP + H(+). Its pathway is carbohydrate degradation; glycolysis; D-glyceraldehyde 3-phosphate and glycerone phosphate from D-glucose: step 3/4. With respect to regulation, allosterically activated by ADP and other diphosphonucleosides, and allosterically inhibited by phosphoenolpyruvate. In terms of biological role, catalyzes the phosphorylation of D-fructose 6-phosphate to fructose 1,6-bisphosphate by ATP, the first committing step of glycolysis. The chain is ATP-dependent 6-phosphofructokinase from Caldanaerobacter subterraneus subsp. tengcongensis (strain DSM 15242 / JCM 11007 / NBRC 100824 / MB4) (Thermoanaerobacter tengcongensis).